The following is a 966-amino-acid chain: MANFQEHLSCSSSPHLPFSESKTFNGLQDELTAMGNHPSPKLLEDQQEKGMVRAELIESVHSPVTTTVLTSVSEDSRDQFENSVLQLREHDESEMAVSQGNSNTVDAESTSGTEDIKIQFSRSGSGSGGFLEGLFGCLRPVWNIIGKAYATDYKLQQQDTWEVPFEEISELQWLGSGAQGAVFLGKFRAEEVAIKKVREQNETDIKHLRKLKHPNIIAFKGVCTQAPCYCIIMEYCAHGQLYEVLRAGRKITPRLLVDWSTGIASGMNYLHLHKIIHRDLKSPNVLVTHTDAVKISDFGTSKELSDKSTKMSFAGTVAWLAPEVIRNEPVSEKVDIWSFGVVLWELLTGEIPYKDVDSSAIIWGVGSNSLHLPVPSTCPDGFKILMKQTWQSKPRNRPSFRQTLMHLDIASADVLATPQETYFKSQAEWREEVKKHFEKIKSEGTCIHRLDEELIRRRREELRHALDIREHYERKLERANNLYMELSAIMLQLEMREKELVKREQAVEKKYPGTYKRHPVRPIIHPNAMEKLMKRKGVPHKSGMQTKRPDLLRSEGIPTTEVAPTASPLSGSPKMSTSSSKSRYRSKPRHRRGNSRGSHSDFVAILKNQPAQENSPNPTYLHQAQSQYPSLHHRNSLQQQYQQPPPAMSQSHHPRLNMHGQDIATCANNLRYFGPAAALRSPLSNHAQRQLPGSSPDLISTAMAADCWRGSEPDKDQAGPWGCCQADPYDPCLQCRPEQYGSLDIPSAEPVGRSPDLSKSPAHNPLLENAQSSEKMEENEFSSCRSESSLGTSHLVTPPALPRKTRPLQKSGDDSSEEEEGEVDSEVEFPRRQRPHRCISSCQSYSTFSSENFSVSDGEEGNTSDHSNSPDELADKLEDRLAEKLDDLLSQTPEIPIDISSHSDGLSDKECAVRRVKTQMSLGKLCVEERGYENPMQFEESDCDSSDGECSDATVRTNKHYSSATW.

2 disordered regions span residues 1–22 (MANF…SESK) and 93–112 (SEMA…STSG). The span at 96-112 (AVSQGNSNTVDAESTSG) shows a compositional bias: polar residues. Positions 168 to 409 (ISELQWLGSG…FRQTLMHLDI (242 aa)) constitute a Protein kinase domain. ATP-binding positions include 174–182 (LGSGAQGAV) and K195. The active-site Proton acceptor is D279. 2 leucine-zipper regions span residues 433 to 454 (VKKH…DEEL) and 486 to 507 (LSAI…EQAV). Disordered regions lie at residues 534–652 (KRKG…SQSH), 744–834 (DIPS…RRQR), 846–873 (STFS…PDEL), and 887–906 (DLLS…SDGL). Residues 567–581 (SPLSGSPKMSTSSSK) show a composition bias toward low complexity. Positions 582–594 (SRYRSKPRHRRGN) are enriched in basic residues. 2 stretches are compositionally biased toward polar residues: residues 609–629 (QPAQ…SQYP) and 781–795 (FSSC…TSHL). Residues 814-827 (DSSEEEEGEVDSEV) are compositionally biased toward acidic residues. The acidic stretch occupies residues 815-828 (SSEEEEGEVDSEVE). Residues 846 to 855 (STFSSENFSV) are compositionally biased toward polar residues.

Belongs to the protein kinase superfamily. STE Ser/Thr protein kinase family. MAP kinase kinase kinase subfamily. Homodimer; forms dimers through the leucine-zipper motif. Interacts with the C-terminus of MAPK8IP1 through the kinase catalytic domain. Binds PRDX3. Associates with the IKK complex through the kinase domain. The cofactor is Mg(2+). Post-translationally, autophosphorylated on serine and threonine residues.

The protein localises to the cytoplasm. It localises to the membrane. The catalysed reaction is L-seryl-[protein] + ATP = O-phospho-L-seryl-[protein] + ADP + H(+). It catalyses the reaction L-threonyl-[protein] + ATP = O-phospho-L-threonyl-[protein] + ADP + H(+). Activated by autophosphorylation and homodimerization. Functionally, activates the JUN N-terminal pathway through activation of the MAP kinase kinase MAP2K7. Acts synergistically with PRDX3 to regulate the activation of NF-kappa-B in the cytosol. This activation is kinase-dependent and involves activating the IKK complex, the IKBKB-containing complex that phosphorylates inhibitors of NF-kappa-B. This Pongo abelii (Sumatran orangutan) protein is Mitogen-activated protein kinase kinase kinase 13.